The following is a 294-amino-acid chain: tRNA dimethylallyltransferase (294 aa).

10–17 provides a ligand contact to ATP; that stretch reads GPTAVGKT. Position 12 to 17 (12 to 17) interacts with substrate; it reads TAVGKT. Residues 35–38 are interaction with substrate tRNA; the sequence is DSQQ.

It belongs to the IPP transferase family. In terms of assembly, monomer. It depends on Mg(2+) as a cofactor.

It catalyses the reaction adenosine(37) in tRNA + dimethylallyl diphosphate = N(6)-dimethylallyladenosine(37) in tRNA + diphosphate. In terms of biological role, catalyzes the transfer of a dimethylallyl group onto the adenine at position 37 in tRNAs that read codons beginning with uridine, leading to the formation of N6-(dimethylallyl)adenosine (i(6)A). The chain is tRNA dimethylallyltransferase from Streptococcus gordonii (strain Challis / ATCC 35105 / BCRC 15272 / CH1 / DL1 / V288).